The following is a 171-amino-acid chain: Photosystem I assembly protein Ycf3 (171 aa).

3 TPR repeats span residues Ala35–Pro68, Ser72–Leu105, and Gly120–Asn153.

It belongs to the Ycf3 family.

It localises to the plastid. The protein localises to the chloroplast thylakoid membrane. Its function is as follows. Essential for the assembly of the photosystem I (PSI) complex. May act as a chaperone-like factor to guide the assembly of the PSI subunits. The sequence is that of Photosystem I assembly protein Ycf3 from Angiopteris evecta (Mule's foot fern).